The primary structure comprises 292 residues: G1/S-specific cyclin-D3 (292 aa).

In terms of domain architecture, Cyclin N-terminal spans 27–152 (VLQSLLRLEE…LVLGKLKWDL (126 aa)). The segment at 256–292 (REAAQTAPSPVPKAPRGSSSQGPSQTSTPTDVTAIHL) is disordered. Residues Ser-264 and Ser-279 each carry the phosphoserine modification. Positions 272–285 (GSSSQGPSQTSTPT) are enriched in low complexity. The residue at position 283 (Thr-283) is a Phosphothreonine.

This sequence belongs to the cyclin family. Cyclin D subfamily. As to quaternary structure, interacts with the CDK4 and CDK6 protein kinases to form a serine/threonine kinase holoenzyme complex. The cyclin subunit imparts substrate specificity to the complex. Interacts with ATF5. Interacts with EIF3K. Component of the ternary complex cyclin D/CDK4/CDKN1B required for nuclear translocation and modulation of CDK4-mediated kinase activity. Can form similar complexes with either CDKN1A or CDKN2A. Post-translationally, phosphorylation at Thr-283 by MAP kinases is required for ubiquitination and degradation by the DCX(AMBRA1) complex. Ubiquitinated by the DCX(AMBRA1) complex during the transition from G1 to S cell phase, leading to its degradation: ubiquitination is dependent on Thr-283 phosphorylation. The DCX(AMBRA1) complex represents the major regulator of CCND3 stability during the G1/S transition. Polyubiquitinated by the SCF(FBXL2) complex, leading to proteasomal degradation.

Its subcellular location is the nucleus. The protein resides in the cytoplasm. Functionally, regulatory component of the cyclin D3-CDK4 (DC) complex that phosphorylates and inhibits members of the retinoblastoma (RB) protein family including RB1 and regulates the cell-cycle during G(1)/S transition. Phosphorylation of RB1 allows dissociation of the transcription factor E2F from the RB/E2F complex and the subsequent transcription of E2F target genes which are responsible for the progression through the G(1) phase. Hypophosphorylates RB1 in early G(1) phase. Cyclin D-CDK4 complexes are major integrators of various mitogenenic and antimitogenic signals. Component of the ternary complex, cyclin D3/CDK4/CDKN1B, required for nuclear translocation and activity of the cyclin D-CDK4 complex. Shows transcriptional coactivator activity with ATF5 independently of CDK4. The sequence is that of G1/S-specific cyclin-D3 from Mus musculus (Mouse).